We begin with the raw amino-acid sequence, 368 residues long: Biotin synthase (368 aa).

The 236-residue stretch at 74 to 309 folds into the Radical SAM core domain; that stretch reads CCGNVVDLCS…QQILRYAGGR (236 aa). 3 residues coordinate [4Fe-4S] cluster: cysteine 92, cysteine 96, and cysteine 99. The [2Fe-2S] cluster site is built by cysteine 137, cysteine 174, cysteine 234, and arginine 304.

The protein belongs to the radical SAM superfamily. Biotin synthase family. As to quaternary structure, homodimer. The cofactor is [4Fe-4S] cluster. Requires [2Fe-2S] cluster as cofactor.

The enzyme catalyses (4R,5S)-dethiobiotin + (sulfur carrier)-SH + 2 reduced [2Fe-2S]-[ferredoxin] + 2 S-adenosyl-L-methionine = (sulfur carrier)-H + biotin + 2 5'-deoxyadenosine + 2 L-methionine + 2 oxidized [2Fe-2S]-[ferredoxin]. Its pathway is cofactor biosynthesis; biotin biosynthesis; biotin from 7,8-diaminononanoate: step 2/2. Its function is as follows. Catalyzes the conversion of dethiobiotin (DTB) to biotin by the insertion of a sulfur atom into dethiobiotin via a radical-based mechanism. This Rippkaea orientalis (strain PCC 8801 / RF-1) (Cyanothece sp. (strain PCC 8801)) protein is Biotin synthase.